The primary structure comprises 285 residues: Hsp90 co-chaperone Cdc37-like 1 (285 aa).

The interval 34-54 (LHNSESMDQEQAMAQAELSEL) is disordered. Residues 35–73 (HNSESMDQEQAMAQAELSELQRSEEEWRRKEAALSQGEN) are a coiled coil.

Belongs to the CDC37 family. As to quaternary structure, forms complexes with Hsp70 and Hsp90.

Its subcellular location is the cytoplasm. Functionally, co-chaperone that binds to numerous proteins and promotes their interaction with Hsp70 and Hsp90. The sequence is that of Hsp90 co-chaperone Cdc37-like 1 (cdc37l1) from Xenopus tropicalis (Western clawed frog).